The primary structure comprises 456 residues: Zinc finger C2HC domain-containing protein 1C (456 aa).

2 disordered regions span residues 16–46 and 85–113; these read MLPHNTTEAPGPHSAKQDSYEQGDSSQQSLK and YPHCTGISQQDPESDSQGQGNGLFYSSGP. Polar residues-rich tracts occupy residues 35-46 and 90-102; these read YEQGDSSQQSLK and GISQQDPESDSQG. A coiled-coil region spans residues 211–265; it reads VQIRRLEAAGESLEEEIRRKQILLRGKLKKTEEELRRIQTQKEQAKENENGELQK. The disordered stretch occupies residues 336–388; sequence NKIRDPVSEPSVEKFSPPSETPVGALQGSARNSSLSMAPDSSGSSGSIEEPQL. Positions 368-382 are enriched in low complexity; the sequence is SSLSMAPDSSGSSGS. The C2HC/C3H-type zinc finger occupies 387 to 416; it reads QLGECSHCGRKFLSFRLERHSNICSRMRGS. Residues C391, C394, H406, and C410 each coordinate Zn(2+).

The protein belongs to the ZC2HC1 family. The cofactor is Zn(2+).

This chain is Zinc finger C2HC domain-containing protein 1C (ZC2HC1C), found in Homo sapiens (Human).